Reading from the N-terminus, the 660-residue chain is Histone deacetylase 5 (660 aa).

At A2 the chain carries N-acetylalanine. The segment at 26 to 349 is histone deacetylase; sequence KVGLIYDETM…SLACVQVLLE (324 aa). H158 (proton donor/acceptor) is an active-site residue. Zn(2+)-binding residues include D198, H200, and D291.

The protein belongs to the histone deacetylase family. HD type 2 subfamily. Interacts with HDA6. It depends on Zn(2+) as a cofactor. As to expression, expressed in stems, leaves, flowers, siliques and mature seeds.

It is found in the nucleus. It localises to the cytoplasm. It catalyses the reaction N(6)-acetyl-L-lysyl-[histone] + H2O = L-lysyl-[histone] + acetate. With respect to regulation, inhibited by trichostatin A (TSA), a well-known histone deacetylase inhibitor. Responsible for the deacetylation of lysine residues on the N-terminal part of the core histones (H2A, H2B, H3 and H4). Histone deacetylation gives a tag for epigenetic repression and plays an important role in transcriptional regulation, cell cycle progression and developmental events. Histone deacetylases act via the formation of large multiprotein complexes. Involved in the regulation of flowering time by repressing FLC and AGL27/MAF1 expression. Forms a histone deacetylase complex with HDA6, FLD and MSI4/FVE that represses FLC gene expression to control flowering time. Unlike its tandem duplication HDA18, HDA5 does not seem to be required for the cellular patterning in the root epidermis. The polypeptide is Histone deacetylase 5 (Arabidopsis thaliana (Mouse-ear cress)).